A 587-amino-acid chain; its full sequence is Membrane protein insertase YidC (587 aa).

5 consecutive transmembrane segments (helical) span residues 5 to 25, 365 to 385, 430 to 450, 480 to 500, and 516 to 536; these read SVIG…FMKP, GLII…LSLA, LGGC…FYVF, LPLY…TVFF, and IMIW…PSGL.

The protein belongs to the OXA1/ALB3/YidC family. Type 1 subfamily. In terms of assembly, interacts with the Sec translocase complex via SecD. Specifically interacts with transmembrane segments of nascent integral membrane proteins during membrane integration.

It is found in the cell inner membrane. Its function is as follows. Required for the insertion and/or proper folding and/or complex formation of integral membrane proteins into the membrane. Involved in integration of membrane proteins that insert both dependently and independently of the Sec translocase complex, as well as at least some lipoproteins. Aids folding of multispanning membrane proteins. The chain is Membrane protein insertase YidC from Chlorobaculum parvum (strain DSM 263 / NCIMB 8327) (Chlorobium vibrioforme subsp. thiosulfatophilum).